Consider the following 438-residue polypeptide: tRNA modification GTPase MnmE (438 aa).

The (6S)-5-formyl-5,6,7,8-tetrahydrofolate site is built by Arg-19, Glu-76, and Lys-115. Residues 211–363 (GYKVAIIGRP…LSKELESYLN (153 aa)) enclose the TrmE-type G domain. GTP is bound by residues 221 to 226 (NVGKSS), 240 to 246 (SETAGTT), and 265 to 268 (DTAG). 2 residues coordinate Mg(2+): Ser-225 and Thr-246. (6S)-5-formyl-5,6,7,8-tetrahydrofolate is bound at residue Lys-438.

This sequence belongs to the TRAFAC class TrmE-Era-EngA-EngB-Septin-like GTPase superfamily. TrmE GTPase family. As to quaternary structure, homodimer. Heterotetramer of two MnmE and two MnmG subunits. It depends on K(+) as a cofactor.

The protein resides in the cytoplasm. Functionally, exhibits a very high intrinsic GTPase hydrolysis rate. Involved in the addition of a carboxymethylaminomethyl (cmnm) group at the wobble position (U34) of certain tRNAs, forming tRNA-cmnm(5)s(2)U34. In Campylobacter fetus subsp. fetus (strain 82-40), this protein is tRNA modification GTPase MnmE.